Reading from the N-terminus, the 466-residue chain is Methylenetetrahydrofolate--tRNA-(uracil-5-)-methyltransferase TrmFO (466 aa).

Position 12–17 (12–17) interacts with FAD; the sequence is GAGLAG.

Belongs to the MnmG family. TrmFO subfamily. It depends on FAD as a cofactor.

The protein resides in the cytoplasm. It carries out the reaction uridine(54) in tRNA + (6R)-5,10-methylene-5,6,7,8-tetrahydrofolate + NADH + H(+) = 5-methyluridine(54) in tRNA + (6S)-5,6,7,8-tetrahydrofolate + NAD(+). The enzyme catalyses uridine(54) in tRNA + (6R)-5,10-methylene-5,6,7,8-tetrahydrofolate + NADPH + H(+) = 5-methyluridine(54) in tRNA + (6S)-5,6,7,8-tetrahydrofolate + NADP(+). Its function is as follows. Catalyzes the folate-dependent formation of 5-methyl-uridine at position 54 (M-5-U54) in all tRNAs. The chain is Methylenetetrahydrofolate--tRNA-(uracil-5-)-methyltransferase TrmFO from Synechococcus elongatus (strain ATCC 33912 / PCC 7942 / FACHB-805) (Anacystis nidulans R2).